The sequence spans 509 residues: MQQDYCPDIAKLAEGGFNKVFILRAKNGREVIARIPTPIAGPAHYTTASEVATMDFLRAVLKLPVPEVFAYSTTSENPVGAEYILMERVEGESLSSRWLSLTTDEVKDIMIQIAEMERKIFDFRFPAYGSLYHTKDLDWKHQIPIVEDFVIGPVSSREFWHGERSKTEIDRGPCRVSPLSTFPFILGFLEKEPTGTGLIIAVGLSPLDCVTSAARREMAVIQRHAKPQPRQTFLLPTNYNIHPSEHTSLLSQFLQVAPHLIRPGSYSAPTLRHPDLSLSNILLAPGTSKIISIIDWQGATILPRFMQAGYPAFCHHDSSQPQSLEIPSLPDDFDKMGIDEQRQIKAIFRLEEANLYYTAATGVHNEEHMNVLKIPHLGMQQYLLRQTGYPWDADVINLRAALVGITTPSVWSKISSAACPVEFSEEEREAAIAESQEWNESEQLLSRVREHLNIDLEGGTEPDNFERAVEGNRQLRIEMVRQAEAGQQEICWRNWPYKDQEDNSMPPQR.

Its function is as follows. Part of the subtelomeric hrmA-associated cluster (HAC) containing genes that alter the hyphal surface (such as reduced total chitin or increased beta-glucan exposure) and perturb inter-hyphal interactions within the developing biofilms, resulting in a loss of vertically aligned polarized growing filaments. Consequently, this hypoxia-typic morphotype (called H-MORPH) with altered biofilm architecture leads to increased hypoxia fitness, increased host inflammation, rapid disease progression, and mortality in a murine model of invasive aspergillosis. This Aspergillus fumigatus (strain ATCC MYA-4609 / CBS 101355 / FGSC A1100 / Af293) (Neosartorya fumigata) protein is Subtelomeric hrmA-associated cluster protein AFUA_5G14880.